The sequence spans 67 residues: Large ribosomal subunit protein bL35 (67 aa).

The protein belongs to the bacterial ribosomal protein bL35 family.

This Novosphingobium aromaticivorans (strain ATCC 700278 / DSM 12444 / CCUG 56034 / CIP 105152 / NBRC 16084 / F199) protein is Large ribosomal subunit protein bL35.